The primary structure comprises 252 residues: Phosphoglycolate phosphatase (252 aa).

Asp13 serves as the catalytic Nucleophile. 3 residues coordinate Mg(2+): Asp13, Asp15, and Asp192.

The protein belongs to the HAD-like hydrolase superfamily. CbbY/CbbZ/Gph/YieH family. In terms of assembly, monomer. The cofactor is Mg(2+). Requires chloride as cofactor.

It catalyses the reaction 2-phosphoglycolate + H2O = glycolate + phosphate. It functions in the pathway organic acid metabolism; glycolate biosynthesis; glycolate from 2-phosphoglycolate: step 1/1. In terms of biological role, specifically catalyzes the dephosphorylation of 2-phosphoglycolate. Is involved in the dissimilation of the intracellular 2-phosphoglycolate formed during the DNA repair of 3'-phosphoglycolate ends, a major class of DNA lesions induced by oxidative stress. The protein is Phosphoglycolate phosphatase of Shigella boydii serotype 4 (strain Sb227).